Reading from the N-terminus, the 312-residue chain is Olfactory receptor 2L5 (312 aa).

Residues 1 to 24 (MENYNQTSTDFILLGLFPPSKIGL) lie on the Extracellular side of the membrane. N-linked (GlcNAc...) asparagine glycosylation is present at asparagine 5. The helical transmembrane segment at 25–48 (FLFILFVLIFLMALIGNLSMILLI) threads the bilayer. The Cytoplasmic portion of the chain corresponds to 49 to 56 (FLDTHLHT). A helical transmembrane segment spans residues 57 to 78 (PMYFLLSQLSLIDLNYISTIVP). Topologically, residues 79 to 99 (KMASDFLYGNKSISFIGCGIQ) are extracellular. A disulfide bridge connects residues cysteine 96 and cysteine 188. The chain crosses the membrane as a helical span at residues 100 to 119 (SFFFMTFAGAEALLLTSMAY). Residues 120–138 (DRYVAICFPLHYPIRMSKR) lie on the Cytoplasmic side of the membrane. The helical transmembrane segment at 139–157 (MYVLMITGSWMIGSINSCA) threads the bilayer. Residues 158–194 (HTVYAFRIPYCKSRAINHFFCDVPAMLTLACTDTWVY) lie on the Extracellular side of the membrane. Residues 195–218 (EYTVFLSSTIFLVFPFTGIACSYG) traverse the membrane as a helical segment. Residues 219–235 (WVLLAVYRMHSAEGRKK) lie on the Cytoplasmic side of the membrane. The chain crosses the membrane as a helical span at residues 236–258 (AYSTCSTHLTVVTFYYAPFAYTY). Over 259 to 271 (LCPRSLRSLTEDK) the chain is Extracellular. Residues 272–291 (VLAVFYTILTPMLNPIIYSL) form a helical membrane-spanning segment. Residues 292-312 (RNKEVMGALTRVIQNIFSVKM) are Cytoplasmic-facing.

Belongs to the G-protein coupled receptor 1 family.

The protein resides in the cell membrane. Its function is as follows. Odorant receptor. This Homo sapiens (Human) protein is Olfactory receptor 2L5 (OR2L5).